The chain runs to 808 residues: Protein translocase subunit SecA 2 (808 aa).

Residues Gln-124, 142-146 (GEGKT), and Asp-535 contribute to the ATP site.

Belongs to the SecA family. In terms of assembly, monomer and homodimer. Part of the essential Sec protein translocation apparatus which comprises SecA, SecYEG and auxiliary proteins SecDF. Other proteins may also be involved.

The protein resides in the cell membrane. Its subcellular location is the cytoplasm. It carries out the reaction ATP + H2O + cellular proteinSide 1 = ADP + phosphate + cellular proteinSide 2.. Part of the Sec protein translocase complex. Interacts with the SecYEG preprotein conducting channel. Has a central role in coupling the hydrolysis of ATP to the transfer of proteins into and across the cell membrane, serving as an ATP-driven molecular motor driving the stepwise translocation of polypeptide chains across the membrane. The chain is Protein translocase subunit SecA 2 from Mycobacterium bovis (strain BCG / Pasteur 1173P2).